The following is a 90-amino-acid chain: Inner kinetochore subunit MHF1 (90 aa).

This sequence belongs to the TAF9 family. CENP-S/MHF1 subfamily. In terms of assembly, the MHF histone-fold complex is a heterotetramer of 2 MHF1-MHF2 heterodimers. Together with MPH1/FANCM, forms the FANCM-MHF complex. Component of the inner kinetochore constitutive centromere-associated network (CCAN) (also known as central kinetochore CTF19 complex in yeast), which is composed of at least AME1, CHL4, CNN1, CTF3, CTF19, IML3, MCM16, MCM21, MCM22, MHF1, MHF2, MIF2, NKP1, NKP2, OKP1 and WIP1.

Its function is as follows. dsDNA-binding component of a FANCM-MHF complex involved in DNA damage repair and genome maintenance. FANCM-MHF promotes gene conversion at blocked replication forks, probably by reversal of the stalled fork. Component of the kinetochore, a multiprotein complex that assembles on centromeric DNA and attaches chromosomes to spindle microtubules, mediating chromosome segregation and sister chromatid segregation during meiosis and mitosis. Component of the inner kinetochore constitutive centromere-associated network (CCAN), which serves as a structural platform for outer kinetochore assembly. The chain is Inner kinetochore subunit MHF1 from Saccharomyces cerevisiae (strain ATCC 204508 / S288c) (Baker's yeast).